Reading from the N-terminus, the 1593-residue chain is ABC transporter C family member 8 (1593 aa).

The next 10 helical transmembrane spans lie at 27-47 (VVMT…LYYL), 75-95 (VIVS…IVSI), 100-120 (FEIL…GLVY), 135-155 (LYWV…TLAI), 169-189 (FSYF…VLFF), 280-300 (FYIA…GPTL), 318-338 (YDGL…SLLL), 392-412 (LCPY…SLVL), 419-439 (ASVF…LAIS), and 505-525 (LLLW…VYIL). The region spanning 280–561 (FYIAALFKII…LPSVVSSIIE (282 aa)) is the ABC transmembrane type-1 1 domain. The ABC transporter 1 domain occupies 594-818 (VKIDNATLEW…GSHFTELMSH (225 aa)). Residue 627 to 634 (GQVGSGKS) coordinates ATP. The tract at residues 816-938 (MSHDEQQQQL…PLQKGEKSSV (123 aa)) is disordered. Residues 844 to 875 (GDNKESENNEEQNEEEEGENENLLEKVLRKSR) are a coiled coil. Positions 851–865 (NNEEQNEEEEGENEN) are enriched in acidic residues. Residues 877–886 (RSPSPSSNRN) are compositionally biased toward low complexity. Residues 905 to 922 (EEDEQDERELMEDIDIDG) are compositionally biased toward acidic residues. A run of 5 helical transmembrane segments spans residues 1005-1025 (IGVL…LLSI), 1064-1084 (AKYY…ATFL), 1157-1177 (IIVI…VGAL), 1251-1271 (LAIR…LYTV), and 1280-1300 (GTAG…NWMV). The region spanning 1010–1308 (ATCIIGFYVL…MVRMSCDLEN (299 aa)) is the ABC transmembrane type-1 2 domain. The ABC transporter 2 domain occupies 1344–1578 (IVFKNLWLTY…QDSIYYSLVK (235 aa)). Position 1378-1385 (1378-1385 (GRTGAGKS)) interacts with ATP.

It belongs to the ABC transporter superfamily. ABCC family. Conjugate transporter (TC 3.A.1.208) subfamily.

The protein localises to the membrane. In Dictyostelium discoideum (Social amoeba), this protein is ABC transporter C family member 8 (abcC8).